Here is a 356-residue protein sequence, read N- to C-terminus: 3-isopropylmalate dehydrogenase (356 aa).

The substrate site is built by arginine 95, arginine 105, arginine 133, and aspartate 223. Mg(2+) is bound by residues aspartate 223, aspartate 247, and aspartate 251. NAD(+) is bound at residue 281-293 (GSAPDIAGQNKAN).

The protein belongs to the isocitrate and isopropylmalate dehydrogenases family. LeuB type 1 subfamily. In terms of assembly, homodimer. It depends on Mg(2+) as a cofactor. Mn(2+) serves as cofactor.

It localises to the cytoplasm. It catalyses the reaction (2R,3S)-3-isopropylmalate + NAD(+) = 4-methyl-2-oxopentanoate + CO2 + NADH. The protein operates within amino-acid biosynthesis; L-leucine biosynthesis; L-leucine from 3-methyl-2-oxobutanoate: step 3/4. Its function is as follows. Catalyzes the oxidation of 3-carboxy-2-hydroxy-4-methylpentanoate (3-isopropylmalate) to 3-carboxy-4-methyl-2-oxopentanoate. The product decarboxylates to 4-methyl-2 oxopentanoate. In Neisseria meningitidis serogroup B (strain ATCC BAA-335 / MC58), this protein is 3-isopropylmalate dehydrogenase.